The chain runs to 88 residues: Putative septation protein SpoVG (88 aa).

The protein belongs to the SpoVG family.

Functionally, could be involved in septation. The protein is Putative septation protein SpoVG of Caldicellulosiruptor bescii (strain ATCC BAA-1888 / DSM 6725 / KCTC 15123 / Z-1320) (Anaerocellum thermophilum).